The sequence spans 428 residues: Aspartate--tRNA(Asp) ligase (428 aa).

E166 is an L-aspartate binding site. Positions 188 to 191 (QLYK) are aspartate. R210 lines the L-aspartate pocket. Residues 210–212 (RAE), 218–220 (RHL), and E351 contribute to the ATP site. Mg(2+) is bound by residues E351 and S354. Residues S354 and R358 each coordinate L-aspartate. 399 to 402 (GLER) provides a ligand contact to ATP.

The protein belongs to the class-II aminoacyl-tRNA synthetase family. Type 2 subfamily. Homodimer. Mg(2+) is required as a cofactor.

It localises to the cytoplasm. It catalyses the reaction tRNA(Asp) + L-aspartate + ATP = L-aspartyl-tRNA(Asp) + AMP + diphosphate. In terms of biological role, catalyzes the attachment of L-aspartate to tRNA(Asp) in a two-step reaction: L-aspartate is first activated by ATP to form Asp-AMP and then transferred to the acceptor end of tRNA(Asp). This chain is Aspartate--tRNA(Asp) ligase, found in Thermoplasma acidophilum (strain ATCC 25905 / DSM 1728 / JCM 9062 / NBRC 15155 / AMRC-C165).